Reading from the N-terminus, the 975-residue chain is Translation initiation factor IF-2 (975 aa).

2 stretches are compositionally biased toward basic and acidic residues: residues 48 to 63 and 120 to 177; these read DHLR…DKRK and AELK…EAAA. Disordered regions lie at residues 48-85 and 98-390; these read DHLR…KART and KRDD…PTEP. Residues 178–211 show a composition bias toward low complexity; it reads KRAAAAQAEAAQQAAAAREQAQRAQSEPAEQSAQ. A compositionally biased stretch (basic and acidic residues) spans 212 to 263; sequence DEARAAAERAAQREAAKKAEDAAREAADKARAEQEEIRKRREAAEAEARAIR. Residues 302-330 show a composition bias toward low complexity; that stretch reads KPAGEAAAARPAAKKPASGAPAPAAAPAG. The segment covering 359–372 has biased composition (gly residues); it reads SSGGVDRGWRGGPK. In terms of domain architecture, tr-type G spans 475–644; that stretch reads PRPPVVTVMG…LLQAEVLELK (170 aa). The segment at 484 to 491 is G1; that stretch reads GHVDHGKT. GTP is bound at residue 484–491; the sequence is GHVDHGKT. The tract at residues 509–513 is G2; that stretch reads GITQH. Residues 530-533 are G3; that stretch reads DTPG. GTP-binding positions include 530-534 and 584-587; these read DTPGH and NKID. The segment at 584 to 587 is G4; it reads NKID. The segment at 620–622 is G5; the sequence is SAK.

It belongs to the TRAFAC class translation factor GTPase superfamily. Classic translation factor GTPase family. IF-2 subfamily.

The protein localises to the cytoplasm. Its function is as follows. One of the essential components for the initiation of protein synthesis. Protects formylmethionyl-tRNA from spontaneous hydrolysis and promotes its binding to the 30S ribosomal subunits. Also involved in the hydrolysis of GTP during the formation of the 70S ribosomal complex. In Burkholderia pseudomallei (strain 1106a), this protein is Translation initiation factor IF-2.